A 1364-amino-acid chain; its full sequence is MAALPQNNLQKQLELFPAKGTSNKLSLQKTKSSVFTFKKKCSPNVSASTGFIPFQQHVLKDKNVNVKQDGTHTALPKATERNKINCFFTPVYTKSGQPPQVVALKDHVHGNDSANKPPSTEDAASKKTGINTSFGSVTSLEEWDDLDDFDTSVSPPKSHAGKGGKTPQKCKNTSPVASFKIQSISPEGPTTEKHDCAKLLYDNNEVASEPRKNLHAKTAESPDQSLVCLASVEPTNLERDMCRNTDYLGTDDLEHDQETLSQVLIEEEDDCEPDFIPPSPSDESLSSPPVLKVISAQRKHKVSSLTDVNDCENTTDHLQGQSVSTSLDSKVPSQLLTLMLEICDLVDKIPISELHVLSCGLDLKKKRDMRKRLLSNDSVFRSSPADSSTVSLTSCTSSTQNRDFNVNAPKGAESLSGSSVSKVFKFNKLAVHDIGTKESENSANSAPNFMEKIGNKTSFSFRAGGDSIMENSFNFHSSVLSNSRFNTPQNEKPISSSTCTRPYSQPIDDMDNPDLDFDIDNFDIEDLDDIHCLDSPAAPSVSSKNVPQYPTIREAQLDSRNKEKNTRNNTGDTTNPSLLSDSLLKPQIENPAHERFRGFNFPHSKEMMKIFHKKFGLHRFRTNQLEAINACLCGEDCFILMPTGGGKSLCYQLPGCISPGVTIVISPLRSLIVDQVQKLTSLDIPATYLTGDKTDAEAASIYLQLSKKDPIIKLLYVTPEKVCASTRLISTMENLYERQLLARFVIDEAHCVSQWGHDFRPDYKRLNVLRQKFQSVPMMALTATANPRVKKDILNQLKMTKPQIFTMSFNRDNLKYEVLPKKPKRVALDCVEWIKKHHPNDSGIIYCLSRHECDTMADTLQKEGLAALAYHAGLADSNRDYVQHKWINQDDCQVICATIAFGMGIDKPDVRYVIHASLPKSVEGYYQESGRAGRDGETSHCLLFYSYHDVTRIRRLIQMEKDGNSHTKQTHFNNLYSMVHYCENVVECRRMQLLSYFGENNFNPNFCKEHTQVACDNCLGKKNYKSRDVTDDVGNIVRFVQDNCSLVQGRGKGRSNNTRLTLNMMVDIFLGSKSAKIQTGLFGKGAAYSRHNAERLFRKLVLDRIIDEELYITFNDQAVAYVKMGERAQAVLNGFLKVDFQDTESASSIRKQKASVVTNTSQREEMVKKCQAELTELCKRLGKIFGVHYFNIFNTATIRRIAESLSPEPEVLLQIDGVTEDKLDKYGAELIDVLQKYSEWTLPVEDICQKSGGPANVSARRSNSDHDDESCDKSSYFSSNNKKGPKRKNSSYFGKSKKRKTGGDGQQSRSKNGNSSYARKNSTAKTSSSYISGSKTGADKRPGFMAPPMPQPNRRFLKPSYSMF.

2 disordered regions span residues valine 108–asparagine 131 and aspartate 147–serine 174. The segment at aspartate 328–aspartate 377 is necessary for dimerization and homooligomerization. 3 disordered regions span residues phenylalanine 380–serine 416, arginine 484–leucine 515, and serine 535–serine 580. Residues serine 387–threonine 399 show a composition bias toward low complexity. Residues arginine 484–tyrosine 503 are compositionally biased toward polar residues. Residues alanine 555–threonine 566 are compositionally biased toward basic and acidic residues. Residues arginine 567–serine 580 are compositionally biased toward polar residues. Residues phenylalanine 620 to glutamine 624 and glycine 644 to serine 648 contribute to the ATP site. The Helicase ATP-binding domain occupies isoleucine 628–glutamine 803. Residues aspartate 747 to histidine 750 carry the DEAH box motif. 3' overhang DNA-binding stretches follow at residues lysine 822–arginine 825 and serine 849–histidine 851. The Helicase C-terminal domain occupies aspartate 829–tyrosine 976. Residue arginine 934 participates in ATP binding. A 3' overhang DNA-binding region spans residues arginine 952–arginine 955. Zn(2+) contacts are provided by cysteine 988, cysteine 1007, cysteine 1015, and cysteine 1018. Residues leucine 1046–arginine 1090 form a DNA Holliday junction binding region. 3' overhang DNA-binding stretches follow at residues threonine 1061 to asparagine 1063, serine 1072 to lysine 1076, and tyrosine 1111 to glutamine 1117. The 81-residue stretch at glutamate 1164–valine 1244 folds into the HRDC domain. The segment at lysine 1179–alanine 1196 is necessary for ssDNA and DNA Holliday junction binding. Asparagine 1194 contacts ATP. The segment at serine 1251–phenylalanine 1364 is disordered. The span at lysine 1273–lysine 1282 shows a compositional bias: polar residues. Residues lysine 1283–lysine 1300 are compositionally biased toward basic residues. A Nuclear localization signal motif is present at residues proline 1285 to threonine 1301. Positions glutamine 1306–lysine 1335 are enriched in polar residues.

This sequence belongs to the helicase family. RecQ subfamily. As to quaternary structure, monomer. Homodimer (via N-terminus). Homotetramer (via N-terminus); dimer of dimers. Homohexamer (via N-terminus). Self-association negatively regulates DNA unwinding amplitude and rate. Oligomer complexes dissociate into monomer in presence of ATP. Zn(2+) is required as a cofactor.

It localises to the nucleus. The catalysed reaction is Couples ATP hydrolysis with the unwinding of duplex DNA by translocating in the 3'-5' direction.. It carries out the reaction ATP + H2O = ADP + phosphate + H(+). In terms of biological role, ATP-dependent DNA helicase that unwinds single- and double-stranded DNA in a 3'-5' direction. Participates in DNA replication and repair. Involved in 5'-end resection of DNA during double-strand break (DSB) repair. Negatively regulates sister chromatid exchange (SCE). Stimulates DNA 4-way junction branch migration and DNA Holliday junction dissolution. Binds single-stranded DNA (ssDNA), forked duplex DNA and DNA Holliday junction. The polypeptide is RecQ-like DNA helicase BLM (blm) (Xenopus laevis (African clawed frog)).